The chain runs to 87 residues: Small ribosomal subunit protein bS20 (87 aa).

Residues 1–11 (MANIKSAKKRA) are compositionally biased toward basic residues. The tract at residues 1–27 (MANIKSAKKRAVQSEKRRQHNASQRSM) is disordered.

Belongs to the bacterial ribosomal protein bS20 family.

In terms of biological role, binds directly to 16S ribosomal RNA. In Haemophilus influenzae (strain PittEE), this protein is Small ribosomal subunit protein bS20.